We begin with the raw amino-acid sequence, 372 residues long: Probable dual-specificity RNA methyltransferase RlmN (372 aa).

Glutamate 106 functions as the Proton acceptor in the catalytic mechanism. A Radical SAM core domain is found at 112 to 359 (YPQRNTVCIS…SCTVRDTRGR (248 aa)). Cysteines 119 and 365 form a disulfide. [4Fe-4S] cluster contacts are provided by cysteine 126, cysteine 130, and cysteine 133. Residues 186–187 (GE), serine 220, 243–245 (SLH), and asparagine 322 each bind S-adenosyl-L-methionine. Catalysis depends on cysteine 365, which acts as the S-methylcysteine intermediate.

It belongs to the radical SAM superfamily. RlmN family. [4Fe-4S] cluster serves as cofactor.

It is found in the cytoplasm. The enzyme catalyses adenosine(2503) in 23S rRNA + 2 reduced [2Fe-2S]-[ferredoxin] + 2 S-adenosyl-L-methionine = 2-methyladenosine(2503) in 23S rRNA + 5'-deoxyadenosine + L-methionine + 2 oxidized [2Fe-2S]-[ferredoxin] + S-adenosyl-L-homocysteine. It carries out the reaction adenosine(37) in tRNA + 2 reduced [2Fe-2S]-[ferredoxin] + 2 S-adenosyl-L-methionine = 2-methyladenosine(37) in tRNA + 5'-deoxyadenosine + L-methionine + 2 oxidized [2Fe-2S]-[ferredoxin] + S-adenosyl-L-homocysteine. Specifically methylates position 2 of adenine 2503 in 23S rRNA and position 2 of adenine 37 in tRNAs. In Mycolicibacterium smegmatis (strain ATCC 700084 / mc(2)155) (Mycobacterium smegmatis), this protein is Probable dual-specificity RNA methyltransferase RlmN.